Here is a 296-residue protein sequence, read N- to C-terminus: Meiotically up-regulated gene 2 protein (296 aa).

It belongs to the UPF0612 family.

The protein localises to the cytoplasm. Its subcellular location is the nucleus. Functionally, has a role in meiosis. This chain is Meiotically up-regulated gene 2 protein (mug2), found in Schizosaccharomyces pombe (strain 972 / ATCC 24843) (Fission yeast).